Consider the following 550-residue polypeptide: Calcium-dependent protein kinase 20 (550 aa).

The tract at residues 1 to 58 (MGNCCVTPEGSGRGRKKQQQEQKQKQKEPKQQQQQQKKGKKPNPFSIEYNRSSAPSGH) is disordered. The N-myristoyl glycine moiety is linked to residue G2. Basic and acidic residues predominate over residues 18-30 (QQQEQKQKQKEPK). The Protein kinase domain maps to 75–333 (YELGGELGRG…AQQVLDHPWL (259 aa)). Residues 81–89 (LGRGEFGVT) and K104 each bind ATP. D199 serves as the catalytic Proton acceptor. The autoinhibitory domain stretch occupies residues 339–369 (APNVNLGETVKARLQQFSVMNKFKKHALRVI). EF-hand domains are found at residues 376-411 (EEVA…LGHQ), 412-447 (MADA…LRKI), 448-483 (GNDE…DLGA), and 484-519 (NHEE…GTDW). Positions 389, 391, 393, 395, 400, 425, 427, 429, 431, 436, 461, 463, 465, 467, 472, 497, 499, 501, 503, and 508 each coordinate Ca(2+).

This sequence belongs to the protein kinase superfamily. Ser/Thr protein kinase family. CDPK subfamily. In terms of tissue distribution, expressed in roots and leaf blades.

It is found in the membrane. The enzyme catalyses L-seryl-[protein] + ATP = O-phospho-L-seryl-[protein] + ADP + H(+). It catalyses the reaction L-threonyl-[protein] + ATP = O-phospho-L-threonyl-[protein] + ADP + H(+). With respect to regulation, activated by calcium. Autophosphorylation may play an important role in the regulation of the kinase activity. May play a role in signal transduction pathways that involve calcium as a second messenger. The chain is Calcium-dependent protein kinase 20 from Oryza sativa subsp. japonica (Rice).